A 507-amino-acid chain; its full sequence is Germ cell nuclear acidic protein (507 aa).

A compositionally biased stretch (low complexity) spans 1 to 51 (MDSGSSSSSSSSGSSSGSCSTSGSGSTSGSSTTSSSSSSSSSSSSSSSSSS). Positions 1-507 (MDSGSSSSSS…GRGRGAKAGK (507 aa)) are disordered. 4 consecutive short sequence motifs (SUMO interaction motif 1 (SIM)) follow at residues 12-15 (SGSS), 66-69 (CVVI), 86-89 (VCEI), and 108-111 (LIVI). 3 stretches are compositionally biased toward basic and acidic residues: residues 122–141 (KNTK…KEGV), 179–354 (SEAK…KGEM), and 431–449 (PQDR…RGDS). Residues 480–507 (GRGRGRGRGRGRGRGRGRGRGRGAKAGK) are compositionally biased toward basic residues.

The protein belongs to the serine-aspartate repeat-containing protein (SDr) family. Interacts (via SIM domains) with SUMO2; this interaction allows the GCNA recruitment to DPCs sites. Interacts with TOP2A; this interaction allows the resolution of topoisomerase II (TOP2A) DNA-protein cross-links. As to expression, germ-cells specific.

It localises to the chromosome. It is found in the nucleus. The protein resides in the PML body. Functionally, may play a role in DNA-protein cross-links (DPCs) clearance through a SUMO-dependent recruitment to sites of DPCs, ensuring the genomic stability by protecting germ cells and early embryos from various sources of damage. Can resolve the topoisomerase II (TOP2A) DPCs. In Mus musculus (Mouse), this protein is Germ cell nuclear acidic protein.